We begin with the raw amino-acid sequence, 1043 residues long: Isoleucine--tRNA ligase (1043 aa).

L-isoleucyl-5'-AMP contacts are provided by P46 and H57. A 'HIGH' region motif is present at residues 47-57; that stretch reads PTANGLPHVGH. Zn(2+) is bound by residues C181 and C184. H319 and D328 together coordinate L-valine. C389, C392, C461, C464, C502, and C504 together coordinate Zn(2+). Residues E550, G551, D553, Q554, and H581 each contribute to the L-isoleucyl-5'-AMP site. The 'KMSKS' region motif lies at 591 to 595; sequence KMSKS. An ATP-binding site is contributed by K594.

This sequence belongs to the class-I aminoacyl-tRNA synthetase family. IleS type 2 subfamily. Monomer. Requires Zn(2+) as cofactor.

The protein localises to the cytoplasm. It catalyses the reaction tRNA(Ile) + L-isoleucine + ATP = L-isoleucyl-tRNA(Ile) + AMP + diphosphate. Its function is as follows. Catalyzes the attachment of isoleucine to tRNA(Ile). As IleRS can inadvertently accommodate and process structurally similar amino acids such as valine, to avoid such errors it has two additional distinct tRNA(Ile)-dependent editing activities. One activity is designated as 'pretransfer' editing and involves the hydrolysis of activated Val-AMP. The other activity is designated 'posttransfer' editing and involves deacylation of mischarged Val-tRNA(Ile). The polypeptide is Isoleucine--tRNA ligase (ileS) (Thermus thermophilus (strain ATCC 27634 / DSM 579 / HB8)).